Consider the following 147-residue polypeptide: Phospholipase A2-beta (147 aa).

The N-terminal stretch at 1–28 (MMFRTSLMRFAAAFFAIVFVVLVGVARS) is a signal peptide. 6 cysteine pairs are disulfide-bonded: cysteine 31-cysteine 58, cysteine 35-cysteine 64, cysteine 40-cysteine 117, cysteine 51-cysteine 71, cysteine 70-cysteine 95, and cysteine 77-cysteine 88. The Ca(2+) site is built by tyrosine 50, glycine 52, and histidine 55. Residue histidine 74 is part of the active site. Aspartate 75 contributes to the Ca(2+) binding site. Positions 144–147 (KTEL) match the Prevents secretion from ER motif.

The protein belongs to the phospholipase A2 family. Ca(2+) serves as cofactor. In terms of tissue distribution, ubiquitous but expressed at a low level. Detected in vascular tissues and in the guard cells. Predominantly detected in pollen.

The protein resides in the secreted. Its subcellular location is the endoplasmic reticulum. The catalysed reaction is a 1,2-diacyl-sn-glycero-3-phosphocholine + H2O = a 1-acyl-sn-glycero-3-phosphocholine + a fatty acid + H(+). Its activity is regulated as follows. Inhibited by aristolochic acid. Functionally, PA2 catalyzes the calcium-dependent hydrolysis of the 2-acyl groups in 3-sn-phosphoglycerides. Releases lysophospholipids (LPLs) and free fatty acids (FFAs) from membrane phospholipids in response to hormones and other external stimuli. Regulates the process of cell elongation and plays important roles in shoot gravitropism by mediating auxin-induced cell elongation. Involved in stomatal opening in response to light. Plays a role in pollen development and germination and tube growth. The polypeptide is Phospholipase A2-beta (PLA2-BETA) (Arabidopsis thaliana (Mouse-ear cress)).